We begin with the raw amino-acid sequence, 72 residues long: SRY-related protein AES4 (72 aa).

The HMG box DNA-binding region spans 1-69 (VKRPMNAFMV…KHMADYPDYK (69 aa)).

It is found in the nucleus. This chain is SRY-related protein AES4, found in Alligator mississippiensis (American alligator).